The sequence spans 338 residues: Fructose-1,6-bisphosphatase class 1 1 (338 aa).

Positions 91, 113, 115, and 116 each coordinate Mg(2+). Residues 116–119, Asn-208, and Lys-274 each bind substrate; that span reads DGSS. Position 280 (Glu-280) interacts with Mg(2+).

This sequence belongs to the FBPase class 1 family. As to quaternary structure, homotetramer. It depends on Mg(2+) as a cofactor.

It localises to the cytoplasm. The enzyme catalyses beta-D-fructose 1,6-bisphosphate + H2O = beta-D-fructose 6-phosphate + phosphate. It functions in the pathway carbohydrate biosynthesis; gluconeogenesis. This chain is Fructose-1,6-bisphosphatase class 1 1, found in Cupriavidus metallidurans (strain ATCC 43123 / DSM 2839 / NBRC 102507 / CH34) (Ralstonia metallidurans).